Here is a 450-residue protein sequence, read N- to C-terminus: Mitochondrial distribution and morphology protein 10 (450 aa).

Belongs to the MDM10 family. As to quaternary structure, component of the ER-mitochondria encounter structure (ERMES) or MDM complex, composed of MMM1, MDM10, MDM12 and MDM34. Associates with the mitochondrial outer membrane sorting assembly machinery SAM(core) complex.

Its subcellular location is the mitochondrion outer membrane. Its function is as follows. Component of the ERMES/MDM complex, which serves as a molecular tether to connect the endoplasmic reticulum and mitochondria. Components of this complex are involved in the control of mitochondrial shape and protein biogenesis and may function in phospholipid exchange. MDM10 is involved in the late assembly steps of the general translocase of the mitochondrial outer membrane (TOM complex). Functions in the TOM40-specific route of the assembly of outer membrane beta-barrel proteins, including the association of TOM40 with the receptor TOM22 and small TOM proteins. Can associate with the SAM(core) complex as well as the MDM12-MMM1 complex, both involved in late steps of the major beta-barrel assembly pathway, that is responsible for biogenesis of all outer membrane beta-barrel proteins. May act as a switch that shuttles between both complexes and channels precursor proteins into the TOM40-specific pathway. Plays a role in mitochondrial morphology and in the inheritance of mitochondria. The polypeptide is Mitochondrial distribution and morphology protein 10 (Paracoccidioides lutzii (strain ATCC MYA-826 / Pb01) (Paracoccidioides brasiliensis)).